A 145-amino-acid polypeptide reads, in one-letter code: Superoxide dismutase [Mn/Fe] (145 aa).

Positions 10 and 64 each coordinate Fe(3+). Mn(2+)-binding residues include H10 and H64.

This sequence belongs to the iron/manganese superoxide dismutase family. Requires Mn(2+) as cofactor. Fe(3+) is required as a cofactor.

The catalysed reaction is 2 superoxide + 2 H(+) = H2O2 + O2. Its function is as follows. Destroys superoxide anion radicals which are normally produced within the cells and which are toxic to biological systems. Catalyzes the dismutation of superoxide anion radicals into O2 and H2O2 by successive reduction and oxidation of the transition metal ion at the active site. The chain is Superoxide dismutase [Mn/Fe] (sodA) from Streptococcus alactolyticus.